Reading from the N-terminus, the 118-residue chain is UPF0342 protein Hore_03100 (118 aa).

Belongs to the UPF0342 family.

In Halothermothrix orenii (strain H 168 / OCM 544 / DSM 9562), this protein is UPF0342 protein Hore_03100.